Here is a 384-residue protein sequence, read N- to C-terminus: S-adenosylmethionine synthase (384 aa).

His15 is a binding site for ATP. Asp17 is a Mg(2+) binding site. Position 43 (Glu43) interacts with K(+). L-methionine contacts are provided by Glu56 and Gln99. The interval 99–109 (QSPDINQGVDR) is flexible loop. ATP is bound by residues 164-166 (DAK), 230-231 (RF), Asp239, 245-246 (RK), Ala262, and Lys266. Asp239 is an L-methionine binding site. Lys270 serves as a coordination point for L-methionine.

Belongs to the AdoMet synthase family. In terms of assembly, homotetramer; dimer of dimers. Mg(2+) serves as cofactor. The cofactor is K(+).

It localises to the cytoplasm. It carries out the reaction L-methionine + ATP + H2O = S-adenosyl-L-methionine + phosphate + diphosphate. It functions in the pathway amino-acid biosynthesis; S-adenosyl-L-methionine biosynthesis; S-adenosyl-L-methionine from L-methionine: step 1/1. Functionally, catalyzes the formation of S-adenosylmethionine (AdoMet) from methionine and ATP. The overall synthetic reaction is composed of two sequential steps, AdoMet formation and the subsequent tripolyphosphate hydrolysis which occurs prior to release of AdoMet from the enzyme. This Shigella boydii serotype 18 (strain CDC 3083-94 / BS512) protein is S-adenosylmethionine synthase.